Reading from the N-terminus, the 241-residue chain is UDP-2,3-diacylglucosamine hydrolase (241 aa).

Aspartate 8, histidine 10, aspartate 41, asparagine 79, and histidine 114 together coordinate Mn(2+). Residue 79–80 participates in substrate binding; the sequence is NR. Positions 122, 160, 164, 167, and 195 each coordinate substrate. Residues histidine 195 and histidine 197 each coordinate Mn(2+).

The protein belongs to the LpxH family. The cofactor is Mn(2+).

Its subcellular location is the cell inner membrane. It catalyses the reaction UDP-2-N,3-O-bis[(3R)-3-hydroxytetradecanoyl]-alpha-D-glucosamine + H2O = 2-N,3-O-bis[(3R)-3-hydroxytetradecanoyl]-alpha-D-glucosaminyl 1-phosphate + UMP + 2 H(+). It participates in glycolipid biosynthesis; lipid IV(A) biosynthesis; lipid IV(A) from (3R)-3-hydroxytetradecanoyl-[acyl-carrier-protein] and UDP-N-acetyl-alpha-D-glucosamine: step 4/6. Its function is as follows. Hydrolyzes the pyrophosphate bond of UDP-2,3-diacylglucosamine to yield 2,3-diacylglucosamine 1-phosphate (lipid X) and UMP by catalyzing the attack of water at the alpha-P atom. Involved in the biosynthesis of lipid A, a phosphorylated glycolipid that anchors the lipopolysaccharide to the outer membrane of the cell. The chain is UDP-2,3-diacylglucosamine hydrolase from Aeromonas hydrophila subsp. hydrophila (strain ATCC 7966 / DSM 30187 / BCRC 13018 / CCUG 14551 / JCM 1027 / KCTC 2358 / NCIMB 9240 / NCTC 8049).